The following is a 246-amino-acid chain: 3-deoxy-manno-octulosonate cytidylyltransferase (246 aa).

This sequence belongs to the KdsB family.

It localises to the cytoplasm. It catalyses the reaction 3-deoxy-alpha-D-manno-oct-2-ulosonate + CTP = CMP-3-deoxy-beta-D-manno-octulosonate + diphosphate. The protein operates within nucleotide-sugar biosynthesis; CMP-3-deoxy-D-manno-octulosonate biosynthesis; CMP-3-deoxy-D-manno-octulosonate from 3-deoxy-D-manno-octulosonate and CTP: step 1/1. It participates in bacterial outer membrane biogenesis; lipopolysaccharide biosynthesis. Functionally, activates KDO (a required 8-carbon sugar) for incorporation into bacterial lipopolysaccharide in Gram-negative bacteria. This Rickettsia massiliae (strain Mtu5) protein is 3-deoxy-manno-octulosonate cytidylyltransferase.